The primary structure comprises 210 residues: Pyridoxine/pyridoxamine 5'-phosphate oxidase (210 aa).

Residues 7 to 10 and K65 contribute to the substrate site; that span reads RDEY. Residues 60–65, 75–76, R81, K82, and Q104 each bind FMN; these read RMVLLK and FT. 3 residues coordinate substrate: Y122, R126, and S130. Residues 139–140 and W183 each bind FMN; that span reads QS. 189-191 serves as a coordination point for substrate; the sequence is RLH. Position 193 (R193) interacts with FMN.

The protein belongs to the pyridoxamine 5'-phosphate oxidase family. As to quaternary structure, homodimer. The cofactor is FMN.

It catalyses the reaction pyridoxamine 5'-phosphate + O2 + H2O = pyridoxal 5'-phosphate + H2O2 + NH4(+). The enzyme catalyses pyridoxine 5'-phosphate + O2 = pyridoxal 5'-phosphate + H2O2. It functions in the pathway cofactor metabolism; pyridoxal 5'-phosphate salvage; pyridoxal 5'-phosphate from pyridoxamine 5'-phosphate: step 1/1. It participates in cofactor metabolism; pyridoxal 5'-phosphate salvage; pyridoxal 5'-phosphate from pyridoxine 5'-phosphate: step 1/1. Catalyzes the oxidation of either pyridoxine 5'-phosphate (PNP) or pyridoxamine 5'-phosphate (PMP) into pyridoxal 5'-phosphate (PLP). In Haemophilus influenzae (strain ATCC 51907 / DSM 11121 / KW20 / Rd), this protein is Pyridoxine/pyridoxamine 5'-phosphate oxidase.